Reading from the N-terminus, the 858-residue chain is Conidiophore development regulator abaA (858 aa).

The segment at 1–22 (MSSSLYHPRPVLSSQRYTPSPD) is disordered. Positions 128 to 221 (QKDKGGVWRR…QVVKKFFEDL (94 aa)) form a DNA-binding region, TEA. Residues 500 to 522 (VEHQRKKEKRTKGDDRKNLDRAG) show a composition bias toward basic and acidic residues. Disordered regions lie at residues 500–535 (VEHQ…GDAA) and 792–858 (TGAG…AGGW). The Nuclear localization signal signature appears at 514–521 (DRKNLDRA). The segment covering 809-822 (SSDQTALWTQSQWA) has biased composition (polar residues).

Belongs to the TEC1 family.

Its subcellular location is the nucleus. In terms of biological role, abaA and wetA are pivotal regulators of conidiophore development and conidium maturation. They act individually and together to regulate their own expression and that of numerous other sporulation-specific genes. Binds to the sequence 5'-CATTCY-3', where Y is a pyrimidine, making both major- and minor-groove contacts. Plays a pivotal role in conidiation by regulating cell cycle pathways and other conidiation-related genes. In Gibberella zeae (strain ATCC MYA-4620 / CBS 123657 / FGSC 9075 / NRRL 31084 / PH-1) (Wheat head blight fungus), this protein is Conidiophore development regulator abaA.